The following is a 182-amino-acid chain: Glutathione-regulated potassium-efflux system ancillary protein KefG (182 aa).

It belongs to the NAD(P)H dehydrogenase (quinone) family. KefG subfamily. Interacts with KefB.

The protein resides in the cell inner membrane. The catalysed reaction is a quinone + NADH + H(+) = a quinol + NAD(+). It catalyses the reaction a quinone + NADPH + H(+) = a quinol + NADP(+). Regulatory subunit of a potassium efflux system that confers protection against electrophiles. Required for full activity of KefB. This is Glutathione-regulated potassium-efflux system ancillary protein KefG from Yersinia pestis bv. Antiqua (strain Nepal516).